The chain runs to 78 residues: Small integral membrane protein 5 (78 aa).

A helical transmembrane segment spans residues 32-52 (ILAFSVLVVFTATVVLLLLIA).

It is found in the membrane. The chain is Small integral membrane protein 5 (SMIM5) from Bos taurus (Bovine).